The following is a 114-amino-acid chain: T cell receptor beta variable 4-1 (114 aa).

An N-terminal signal peptide occupies residues M1–T21. Positions E22 to Q114 constitute an Ig-like domain. A disulfide bond links C42 and C110. Residues N76 and N89 are each glycosylated (N-linked (GlcNAc...) asparagine).

Alpha-beta TR is a heterodimer composed of an alpha and beta chain; disulfide-linked. The alpha-beta TR is associated with the transmembrane signaling CD3 coreceptor proteins to form the TR-CD3 (TcR or TCR). The assembly of alpha-beta TR heterodimers with CD3 occurs in the endoplasmic reticulum where a single alpha-beta TR heterodimer associates with one CD3D-CD3E heterodimer, one CD3G-CD3E heterodimer and one CD247 homodimer forming a stable octameric structure. CD3D-CD3E and CD3G-CD3E heterodimers preferentially associate with TR alpha and TR beta chains, respectively. The association of the CD247 homodimer is the last step of TcR assembly in the endoplasmic reticulum and is required for transport to the cell surface.

Its subcellular location is the cell membrane. In terms of biological role, v region of the variable domain of T cell receptor (TR) beta chain that participates in the antigen recognition. Alpha-beta T cell receptors are antigen specific receptors which are essential to the immune response and are present on the cell surface of T lymphocytes. Recognize peptide-major histocompatibility (MH) (pMH) complexes that are displayed by antigen presenting cells (APC), a prerequisite for efficient T cell adaptive immunity against pathogens. Binding of alpha-beta TR to pMH complex initiates TR-CD3 clustering on the cell surface and intracellular activation of LCK that phosphorylates the ITAM motifs of CD3G, CD3D, CD3E and CD247 enabling the recruitment of ZAP70. In turn ZAP70 phosphorylates LAT, which recruits numerous signaling molecules to form the LAT signalosome. The LAT signalosome propagates signal branching to three major signaling pathways, the calcium, the mitogen-activated protein kinase (MAPK) kinase and the nuclear factor NF-kappa-B (NF-kB) pathways, leading to the mobilization of transcription factors that are critical for gene expression and essential for T cell growth and differentiation. The T cell repertoire is generated in the thymus, by V-(D)-J rearrangement. This repertoire is then shaped by intrathymic selection events to generate a peripheral T cell pool of self-MH restricted, non-autoaggressive T cells. Post-thymic interaction of alpha-beta TR with the pMH complexes shapes TR structural and functional avidity. The chain is T cell receptor beta variable 4-1 from Homo sapiens (Human).